The primary structure comprises 616 residues: Adenylosuccinate synthetase 1 (616 aa).

The interval 1-27 is disordered; sequence MDKQAERGQSAGPVKTPQGTQPPAHNY. Residues 17 to 27 are compositionally biased toward polar residues; the sequence is PQGTQPPAHNY. GTP contacts are provided by residues 87–93 and 117–119; these read GDEGKGK and GHT. Aspartate 88 (proton acceptor) is an active-site residue. Aspartate 88 and glycine 117 together coordinate Mg(2+). Residues 88-91, 115-118, threonine 202, lysine 216, glutamine 328, threonine 343, and lysine 472 each bind IMP; these read DEGK and NAGH. Histidine 118 functions as the Proton donor in the catalytic mechanism. 468–474 contributes to the substrate binding site; sequence AVTKKPR. Residues arginine 474 and 603-605 contribute to the GTP site; that span reads GNG.

This sequence belongs to the adenylosuccinate synthetase family. In terms of assembly, homodimer. Mg(2+) is required as a cofactor.

The protein resides in the cytoplasm. It carries out the reaction IMP + L-aspartate + GTP = N(6)-(1,2-dicarboxyethyl)-AMP + GDP + phosphate + 2 H(+). It participates in purine metabolism; AMP biosynthesis via de novo pathway; AMP from IMP: step 1/2. Its function is as follows. Plays an important role in the salvage pathway for purine nucleotide biosynthesis. Catalyzes the first committed step in the biosynthesis of AMP from IMP. In Trypanosoma cruzi (strain CL Brener), this protein is Adenylosuccinate synthetase 1.